We begin with the raw amino-acid sequence, 96 residues long: Large ribosomal subunit protein eL14 (96 aa).

It belongs to the eukaryotic ribosomal protein eL14 family.

This chain is Large ribosomal subunit protein eL14, found in Saccharolobus islandicus (strain Y.N.15.51 / Yellowstone #2) (Sulfolobus islandicus).